A 968-amino-acid chain; its full sequence is RNA polymerase-associated protein RapA (968 aa).

Residues Asp164–Asn334 form the Helicase ATP-binding domain. Asp177–Thr184 is an ATP binding site. The DEAH box signature appears at Asp280–His283. A Helicase C-terminal domain is found at Arg490–Gly662.

The protein belongs to the SNF2/RAD54 helicase family. RapA subfamily. Interacts with the RNAP. Has a higher affinity for the core RNAP than for the holoenzyme. Its ATPase activity is stimulated by binding to RNAP.

Transcription regulator that activates transcription by stimulating RNA polymerase (RNAP) recycling in case of stress conditions such as supercoiled DNA or high salt concentrations. Probably acts by releasing the RNAP, when it is trapped or immobilized on tightly supercoiled DNA. Does not activate transcription on linear DNA. Probably not involved in DNA repair. In Escherichia coli O81 (strain ED1a), this protein is RNA polymerase-associated protein RapA.